Reading from the N-terminus, the 300-residue chain is Dihydroorotate dehydrogenase B (NAD(+)), catalytic subunit (300 aa).

Residues Ser-20 and 44–45 contribute to the FMN site; that span reads KG. Residues Lys-44 and 68–72 each bind substrate; that span reads NSVGL. Residues Asn-98 and Asn-124 each coordinate FMN. Substrate is bound at residue Asn-124. Cys-127 acts as the Nucleophile in catalysis. Lys-162 and Ile-188 together coordinate FMN. 189 to 190 is a binding site for substrate; sequence NT. FMN contacts are provided by residues Gly-214, 240-241, and 262-263; these read GG and GT.

The protein belongs to the dihydroorotate dehydrogenase family. Type 1 subfamily. Heterotetramer of 2 PyrK and 2 PyrD type B subunits. FMN serves as cofactor.

The protein localises to the cytoplasm. The catalysed reaction is (S)-dihydroorotate + NAD(+) = orotate + NADH + H(+). It participates in pyrimidine metabolism; UMP biosynthesis via de novo pathway; orotate from (S)-dihydroorotate (NAD(+) route): step 1/1. Catalyzes the conversion of dihydroorotate to orotate with NAD(+) as electron acceptor. This is Dihydroorotate dehydrogenase B (NAD(+)), catalytic subunit (pyrD) from Caldicellulosiruptor saccharolyticus (strain ATCC 43494 / DSM 8903 / Tp8T 6331).